The following is an 87-amino-acid chain: Small ribosomal subunit protein bS20 (87 aa).

The segment at 1–20 is disordered; it reads MANHKSAEKRARQTIKRTER.

This sequence belongs to the bacterial ribosomal protein bS20 family.

Binds directly to 16S ribosomal RNA. The polypeptide is Small ribosomal subunit protein bS20 (Campylobacter lari (strain RM2100 / D67 / ATCC BAA-1060)).